Reading from the N-terminus, the 517-residue chain is MELEELGIREECGVFGCIASGDWPTQLDVPHVITLGLVGLQHRGQESAGIVTSDGSAVPKFRVHKGMGLVNHVFTEDNLKKLYDSNLGIGHTRYATTGKCELENCQPFVVETLHGKIAVAHNGELVNAARLRKKLLRQGIGLSTSSDSEMITQLLAYTPPQEKDDAPDWVARIKNLMKEAPAAYSLVIMHRDFIYAVRDPYGNRPLCIGRLMPVSDVNDKEKKSSETEGWVVSSESCSFLSIGARYCHEVKPGEIVEISRHGIRTLDIIPRSNGDPVAFCIFEYVYFARPDSMFEDQMVYTVRYRCGQQLAIEAPVEADLVSTVPESATPAALGYATKCGLPYVEVLCKNRYVGRTFIQPNMRLRQLGVAKKFGVLSDNFKGKRIVLIDDSIVRGNTISPIIKLLKESGAKEVHIRVASPPIKYPCFMGINIPTKEELIANKPEFDCLAEYLGANSVVYLSVEGLVSSVQQEIKFKKQKVKKHDIAIQENGNGLEYFEKTGHCTACLTGQYPVELEW.

At methionine 1 the chain carries N-acetylmethionine. A propeptide spanning residues 1–11 is cleaved from the precursor; sequence MELEELGIREE. Cysteine 12 serves as the catalytic Nucleophile. The region spanning 12–261 is the Glutamine amidotransferase type-2 domain; that stretch reads CGVFGCIASG…PGEIVEISRH (250 aa). Cysteine 280 contributes to the [4Fe-4S] cluster binding site. The Mg(2+) site is built by serine 327, aspartate 389, and aspartate 390. 3 residues coordinate [4Fe-4S] cluster: cysteine 426, cysteine 503, and cysteine 506.

In the C-terminal section; belongs to the purine/pyrimidine phosphoribosyltransferase family. Homotetramer. It depends on Mg(2+) as a cofactor. Requires [4Fe-4S] cluster as cofactor.

The enzyme catalyses 5-phospho-beta-D-ribosylamine + L-glutamate + diphosphate = 5-phospho-alpha-D-ribose 1-diphosphate + L-glutamine + H2O. It participates in purine metabolism; IMP biosynthesis via de novo pathway; N(1)-(5-phospho-D-ribosyl)glycinamide from 5-phospho-alpha-D-ribose 1-diphosphate: step 1/2. Catalyzes the formation of phosphoribosylamine from phosphoribosylpyrophosphate (PRPP) and glutamine. The chain is Amidophosphoribosyltransferase from Mus musculus (Mouse).